The sequence spans 75 residues: Small ribosomal subunit protein bS18 (75 aa).

This sequence belongs to the bacterial ribosomal protein bS18 family. As to quaternary structure, part of the 30S ribosomal subunit. Forms a tight heterodimer with protein bS6.

Functionally, binds as a heterodimer with protein bS6 to the central domain of the 16S rRNA, where it helps stabilize the platform of the 30S subunit. In Moorella thermoacetica (strain ATCC 39073 / JCM 9320), this protein is Small ribosomal subunit protein bS18.